A 412-amino-acid polypeptide reads, in one-letter code: MTITVVLGAQWGDEGKGKLVDGQCRDAQLCARAAGGHNAGHEVRVSFHLLPSGLINPKWFYHSMNFIGSGVVFHVPSFFSELQELEDKGLVAVHDRILVSDRVNVLLDMHIAVDGLEERELGGIGPCYQASRARNGIKLTDVFHPELFEQKVRRLADGYQKRFGELFDYDIKAELARFDEYRETLKKYVVDGVSFMRSAQQSDMKIVIEGANALMLDIDYGSYPFVTSSSTTLAGIIGGLTLNPKNITEVVGVVKAYTTRVGSGAFKTEDTEEIGTKLQEIGREWGTSTGRRRRSYTDLVVVKYSNSINYYDSLNLTKLDILDTFETIKIAIAYKVDGEELDSYPADLDILERAEVVYHEMPGWQKPTTNAKTYYDLPKAAREYIEYIEKFVGVKVKYIGTGPDREAMIQRA.

GTP-binding positions include 12–18 (GDEGKGK) and 40–42 (GHE). Asp13 serves as the catalytic Proton acceptor. Asp13 and Gly40 together coordinate Mg(2+). IMP contacts are provided by residues 13-16 (DEGK), 38-41 (NAGH), Arg134, Asn212, Thr227, and Arg291. His41 (proton donor) is an active-site residue. 287–293 (TSTGRRR) provides a ligand contact to substrate. Residues Arg293, 318-320 (KLD), and 400-402 (GTG) contribute to the GTP site.

This sequence belongs to the adenylosuccinate synthetase family. As to quaternary structure, homodimer. Mg(2+) serves as cofactor.

It localises to the cytoplasm. It catalyses the reaction IMP + L-aspartate + GTP = N(6)-(1,2-dicarboxyethyl)-AMP + GDP + phosphate + 2 H(+). It functions in the pathway purine metabolism; AMP biosynthesis via de novo pathway; AMP from IMP: step 1/2. Its function is as follows. Plays an important role in the de novo pathway and in the salvage pathway of purine nucleotide biosynthesis. Catalyzes the first committed step in the biosynthesis of AMP from IMP. The polypeptide is Adenylosuccinate synthetase (Fusarium vanettenii (strain ATCC MYA-4622 / CBS 123669 / FGSC 9596 / NRRL 45880 / 77-13-4) (Fusarium solani subsp. pisi)).